The following is a 161-amino-acid chain: Phosphopantetheine adenylyltransferase (161 aa).

Serine 10 is a binding site for substrate. Residues 10-11 (SF) and histidine 18 contribute to the ATP site. Positions 42, 75, and 89 each coordinate substrate. Residues 90 to 92 (GLR), glutamate 100, and 125 to 131 (LSPISSS) contribute to the ATP site.

Belongs to the bacterial CoaD family. In terms of assembly, homohexamer. Requires Mg(2+) as cofactor.

Its subcellular location is the cytoplasm. The catalysed reaction is (R)-4'-phosphopantetheine + ATP + H(+) = 3'-dephospho-CoA + diphosphate. It functions in the pathway cofactor biosynthesis; coenzyme A biosynthesis; CoA from (R)-pantothenate: step 4/5. Its function is as follows. Reversibly transfers an adenylyl group from ATP to 4'-phosphopantetheine, yielding dephospho-CoA (dPCoA) and pyrophosphate. This chain is Phosphopantetheine adenylyltransferase, found in Streptococcus agalactiae serotype Ia (strain ATCC 27591 / A909 / CDC SS700).